Consider the following 155-residue polypeptide: Transcriptional regulator MraZ (155 aa).

2 SpoVT-AbrB domains span residues Thr-7–Glu-54 and Val-83–Lys-126.

It belongs to the MraZ family. In terms of assembly, forms oligomers.

It localises to the cytoplasm. Its subcellular location is the nucleoid. The polypeptide is Transcriptional regulator MraZ (Christiangramia forsetii (strain DSM 17595 / CGMCC 1.15422 / KT0803) (Gramella forsetii)).